Reading from the N-terminus, the 339-residue chain is DnaJ homolog subfamily C member 22 (339 aa).

One can recognise a TM2 domain in the interval 4 to 50 (GLLMTYVLWALGGPVGLHHLYLGRDSHALLWMLTLGGGGLGWLWEFW). A run of 7 helical transmembrane segments spans residues 5–25 (LLMTYVLWALGGPVGLHHLYL), 30–50 (HALLWMLTLGGGGLGWLWEFW), 81–101 (FASQIVVGVYFGLVALVSLSS), 105–125 (FYIVGLPLAVGLGVLLVAAVG), 135–155 (LGAAFLTSPVFYGRPIAILPI), 185–205 (VGLAYLAFTGPLAYSTMYNTA), and 218–238 (FLSWFSFFPLLGRLVESVLLL). The 63-residue stretch at 277-339 (LAHQVLGVPE…LSQPKKPRAS (63 aa)) folds into the J domain.

Its subcellular location is the membrane. May function as a co-chaperone. This Mus musculus (Mouse) protein is DnaJ homolog subfamily C member 22 (Dnajc22).